A 532-amino-acid polypeptide reads, in one-letter code: Cilia- and flagella-associated protein 97 (532 aa).

Ser19 is subject to Phosphoserine. Disordered regions lie at residues 28–83 (ETNS…PVEN), 116–263 (IPNR…TPDI), 306–333 (KAAK…SLDH), 398–421 (LSRQ…PPKL), and 485–532 (GQYS…TAWL). A compositionally biased stretch (basic and acidic residues) spans 35–49 (KQNDDPKERIDKDTK). Residues 50-63 (NVNSNTGMQTTENY) show a composition bias toward polar residues. Residues 67-82 (KGNERNVKFPPEHPVE) show a composition bias toward basic and acidic residues. Residues 127–139 (GEDDYYTDGEESS) are compositionally biased toward acidic residues. A Phosphothreonine modification is found at Thr133. Residues Ser138 and Ser139 each carry the phosphoserine modification. Low complexity-rich tracts occupy residues 170 to 185 (SSSS…SGSG) and 194 to 205 (DSHLSDSSPSSK). Ser218 is subject to Phosphoserine. Residues 227–239 (IKSTETQPSSTTP) are compositionally biased toward polar residues. Ser248 bears the Phosphoserine mark. Polar residues predominate over residues 253–263 (TDVSPLSTPDI). The span at 320-329 (SSKSSSVLDS) shows a compositional bias: low complexity. Ser330 carries the post-translational modification Phosphoserine. A coiled-coil region spans residues 374–450 (GKNYSFTREE…ALLKRLEAVK (77 aa)). Over residues 493 to 503 (SRTSSATSGLS) the composition is skewed to polar residues.

The protein belongs to the CFAP97 family.

This is Cilia- and flagella-associated protein 97 from Homo sapiens (Human).